The sequence spans 644 residues: Exoribonuclease 2 (644 aa).

The RNB domain maps to 189–516 (REDLTALDFV…NHRLLKAVIK (328 aa)). In terms of domain architecture, S1 motif spans 561 to 643 (DTRFAAEIVD…ETRSIIARPV (83 aa)).

The protein belongs to the RNR ribonuclease family. RNase II subfamily.

It is found in the cytoplasm. It catalyses the reaction Exonucleolytic cleavage in the 3'- to 5'-direction to yield nucleoside 5'-phosphates.. Functionally, involved in mRNA degradation. Hydrolyzes single-stranded polyribonucleotides processively in the 3' to 5' direction. In Escherichia coli O139:H28 (strain E24377A / ETEC), this protein is Exoribonuclease 2.